Here is a 301-residue protein sequence, read N- to C-terminus: 33 kDa chaperonin (301 aa).

Disulfide bonds link C239-C241 and C272-C275.

Belongs to the HSP33 family. Post-translationally, under oxidizing conditions two disulfide bonds are formed involving the reactive cysteines. Under reducing conditions zinc is bound to the reactive cysteines and the protein is inactive.

It is found in the cytoplasm. Its function is as follows. Redox regulated molecular chaperone. Protects both thermally unfolding and oxidatively damaged proteins from irreversible aggregation. Plays an important role in the bacterial defense system toward oxidative stress. The sequence is that of 33 kDa chaperonin from Trichormus variabilis (strain ATCC 29413 / PCC 7937) (Anabaena variabilis).